Here is a 175-residue protein sequence, read N- to C-terminus: Shikimate kinase (175 aa).

16 to 21 (GAGKST) serves as a coordination point for ATP. Residue serine 20 participates in Mg(2+) binding. The substrate site is built by aspartate 38, arginine 62, and glycine 84. Residue arginine 122 coordinates ATP. Arginine 141 contributes to the substrate binding site.

The protein belongs to the shikimate kinase family. As to quaternary structure, monomer. The cofactor is Mg(2+).

It is found in the cytoplasm. It carries out the reaction shikimate + ATP = 3-phosphoshikimate + ADP + H(+). It functions in the pathway metabolic intermediate biosynthesis; chorismate biosynthesis; chorismate from D-erythrose 4-phosphate and phosphoenolpyruvate: step 5/7. Its function is as follows. Catalyzes the specific phosphorylation of the 3-hydroxyl group of shikimic acid using ATP as a cosubstrate. The chain is Shikimate kinase from Legionella pneumophila (strain Paris).